Consider the following 431-residue polypeptide: 4-hydroxy-3-methylbut-2-en-1-yl diphosphate synthase (flavodoxin) (431 aa).

Over residues 1–12 (MNKLENPLRDDV) the composition is skewed to basic and acidic residues. The interval 1-20 (MNKLENPLRDDVAGPAPRHQ) is disordered. [4Fe-4S] cluster contacts are provided by Cys310, Cys313, Cys356, and Glu363.

This sequence belongs to the IspG family. [4Fe-4S] cluster is required as a cofactor.

The enzyme catalyses (2E)-4-hydroxy-3-methylbut-2-enyl diphosphate + oxidized [flavodoxin] + H2O + 2 H(+) = 2-C-methyl-D-erythritol 2,4-cyclic diphosphate + reduced [flavodoxin]. The protein operates within isoprenoid biosynthesis; isopentenyl diphosphate biosynthesis via DXP pathway; isopentenyl diphosphate from 1-deoxy-D-xylulose 5-phosphate: step 5/6. Functionally, converts 2C-methyl-D-erythritol 2,4-cyclodiphosphate (ME-2,4cPP) into 1-hydroxy-2-methyl-2-(E)-butenyl 4-diphosphate. In Rhodopseudomonas palustris (strain TIE-1), this protein is 4-hydroxy-3-methylbut-2-en-1-yl diphosphate synthase (flavodoxin).